The following is a 455-amino-acid chain: Ribulose bisphosphate carboxylase large chain (455 aa).

At Lys-5 the chain carries N6,N6,N6-trimethyllysine. Substrate-binding residues include Asn-114 and Thr-164. Lys-166 serves as the catalytic Proton acceptor. Lys-168 is a binding site for substrate. Positions 192, 194, and 195 each coordinate Mg(2+). Lys-192 is subject to N6-carboxylysine. Residue His-285 is the Proton acceptor of the active site. 3 residues coordinate substrate: Arg-286, His-318, and Ser-370.

This sequence belongs to the RuBisCO large chain family. Type I subfamily. Heterohexadecamer of 8 large chains and 8 small chains; disulfide-linked. The disulfide link is formed within the large subunit homodimers. Mg(2+) serves as cofactor. Post-translationally, the disulfide bond which can form in the large chain dimeric partners within the hexadecamer appears to be associated with oxidative stress and protein turnover.

It localises to the plastid. The protein localises to the chloroplast. It catalyses the reaction 2 (2R)-3-phosphoglycerate + 2 H(+) = D-ribulose 1,5-bisphosphate + CO2 + H2O. The catalysed reaction is D-ribulose 1,5-bisphosphate + O2 = 2-phosphoglycolate + (2R)-3-phosphoglycerate + 2 H(+). Functionally, ruBisCO catalyzes two reactions: the carboxylation of D-ribulose 1,5-bisphosphate, the primary event in carbon dioxide fixation, as well as the oxidative fragmentation of the pentose substrate in the photorespiration process. Both reactions occur simultaneously and in competition at the same active site. The chain is Ribulose bisphosphate carboxylase large chain from Lupinus paraguariensis (Lupine).